A 33-amino-acid chain; its full sequence is Zinc metalloproteinase-disintegrin-like moojenin (33 aa).

Residues 8–33 (PPVCGNELLEVGEECDCGTPENCQNE) form the Disintegrin domain. Residues V10, N13, L15, E17, E20, and D23 each coordinate Ca(2+). Disulfide bonds link C11-C30 and C24-C30.

Belongs to the venom metalloproteinase (M12B) family. P-III subfamily. P-IIIb sub-subfamily. Monomer. It depends on Zn(2+) as a cofactor. In terms of processing, the N-terminus (from the N-terminal region of the metalloproteinase domain) is blocked. As to expression, expressed by the venom gland.

It localises to the secreted. The fibrinogenolytic and coagulant activities of the moojenin were abolished by preincubation with EDTA, 1,10-phenanthroline and beta-mercaptoethanol. Its function is as follows. Metalloproteinase moojenin: snake venom metalloproteinase that cleaves both alpha- and beta-chains of fibrinogen, but not the gamma-chain. Shows a coagulant activity on bovine plasma about 3.1 fold lower than crude venom. Renders the blood incoagulable when intraperitoneally administered into mice. Induces necrosis in liver and muscle, but does not cause histological alterations in mouse lungs, kidney or heart. This chain is Zinc metalloproteinase-disintegrin-like moojenin, found in Bothrops moojeni (Lance-headed viper).